The sequence spans 163 residues: Putative H/ACA ribonucleoprotein complex subunit 2-like protein (163 aa).

A disordered region spans residues 1–27 (MGKRNLDETMNESTVSEANGDATAPTT).

This sequence belongs to the eukaryotic ribosomal protein eL8 family. Component of the small nucleolar ribonucleoprotein particle containing H/ACA-type snoRNAs (H/ACA snoRNPs).

It localises to the nucleus. Its subcellular location is the nucleolus. Functionally, required for ribosome biogenesis. Part of a complex which catalyzes pseudouridylation of rRNA. This involves the isomerization of uridine such that the ribose is subsequently attached to C5, instead of the normal N1. Pseudouridine ('psi') residues may serve to stabilize the conformation of rRNAs. The protein is Putative H/ACA ribonucleoprotein complex subunit 2-like protein of Caenorhabditis elegans.